We begin with the raw amino-acid sequence, 37 residues long: Large ribosomal subunit protein bL36 (37 aa).

It belongs to the bacterial ribosomal protein bL36 family.

In Fusobacterium nucleatum subsp. nucleatum (strain ATCC 25586 / DSM 15643 / BCRC 10681 / CIP 101130 / JCM 8532 / KCTC 2640 / LMG 13131 / VPI 4355), this protein is Large ribosomal subunit protein bL36 (rpmJ).